Reading from the N-terminus, the 308-residue chain is Aspartate carbamoyltransferase catalytic subunit (308 aa).

Arginine 57 and threonine 58 together coordinate carbamoyl phosphate. Lysine 86 contributes to the L-aspartate binding site. The carbamoyl phosphate site is built by arginine 107, histidine 135, and glutamine 138. Positions 168 and 229 each coordinate L-aspartate. Leucine 268 and proline 269 together coordinate carbamoyl phosphate.

This sequence belongs to the aspartate/ornithine carbamoyltransferase superfamily. ATCase family. Heterooligomer of catalytic and regulatory chains.

It carries out the reaction carbamoyl phosphate + L-aspartate = N-carbamoyl-L-aspartate + phosphate + H(+). It participates in pyrimidine metabolism; UMP biosynthesis via de novo pathway; (S)-dihydroorotate from bicarbonate: step 2/3. Its function is as follows. Catalyzes the condensation of carbamoyl phosphate and aspartate to form carbamoyl aspartate and inorganic phosphate, the committed step in the de novo pyrimidine nucleotide biosynthesis pathway. The sequence is that of Aspartate carbamoyltransferase catalytic subunit from Pyrococcus abyssi (strain GE5 / Orsay).